The sequence spans 198 residues: Ion-translocating oxidoreductase complex subunit B (198 aa).

The segment at methionine 1–serine 28 is hydrophobic. Positions glutamate 34–valine 92 constitute a 4Fe-4S domain. [4Fe-4S] cluster-binding residues include cysteine 51, cysteine 54, cysteine 59, cysteine 75, cysteine 115, cysteine 118, cysteine 121, cysteine 125, cysteine 145, cysteine 148, cysteine 151, and cysteine 155. 4Fe-4S ferredoxin-type domains are found at residues methionine 106–lysine 135 and alanine 136–valine 165.

The protein belongs to the 4Fe4S bacterial-type ferredoxin family. RnfB subfamily. The complex is composed of six subunits: RnfA, RnfB, RnfC, RnfD, RnfE and RnfG. [4Fe-4S] cluster is required as a cofactor.

The protein resides in the cell inner membrane. In terms of biological role, part of a membrane-bound complex that couples electron transfer with translocation of ions across the membrane. The sequence is that of Ion-translocating oxidoreductase complex subunit B from Pasteurella multocida (strain Pm70).